A 937-amino-acid polypeptide reads, in one-letter code: AP-2 complex subunit beta (937 aa).

The residue at position 2 (Thr-2) is an N-acetylthreonine. Ser-4 is modified (phosphoserine). Lys-265 bears the N6-acetyllysine mark. A disordered region spans residues 593-617 (LPIHHGSTDAGDSPVGTTTTTNLEQ). Residues 607 to 617 (VGTTTTTNLEQ) are compositionally biased toward polar residues. Phosphotyrosine is present on residues Tyr-737 and Tyr-928.

Belongs to the adaptor complexes large subunit family. In terms of assembly, adaptor protein complex 2 (AP-2) is a heterotetramer composed of two large adaptins (alpha-type subunit AP2A1 or AP2A2 and beta-type subunit AP2B1), a medium adaptin (mu-type subunit AP2M1) and a small adaptin (sigma-type subunit AP2S1). Interacts with EPN1. Interacts with EPS15; clathrin competes with EPS15. Interacts with SNAP91; clathrin competes with SNAP91. Interacts with CLTC; clathrin competes with EPS15, SNAP91 and PIP5K1C. Interacts with LDLRAP1. Interacts with AMPH and BIN1. Interacts with ARF6 (GDP-bound). Interacts (dephosphorylated at Tyr-737) with ARRB1; phosphorylation of AP2B1 at Tyr-737 disrupts the interaction. Interacts with SLC2A8. Interacts with SCYL1 and SCYL2. Interacts with TGFBR1 and TGFBR2. Interacts with PIP5K1C; clathrin competes with PIP5K1C. Interacts with DENND1B. Interacts with FCHO1. Interacts with RFTN1. Interacts with KIAA1107. Together with AP2A1 or AP2A2 and AP2M1, it interacts with ADAM10; this interaction facilitates ADAM10 endocytosis from the plasma membrane during long-term potentiation in hippocampal neurons. As to expression, expressed in the brain (at protein level).

Its subcellular location is the cell membrane. The protein localises to the membrane. It is found in the coated pit. Its function is as follows. Component of the adaptor protein complex 2 (AP-2). Adaptor protein complexes function in protein transport via transport vesicles in different membrane traffic pathways. Adaptor protein complexes are vesicle coat components and appear to be involved in cargo selection and vesicle formation. AP-2 is involved in clathrin-dependent endocytosis in which cargo proteins are incorporated into vesicles surrounded by clathrin (clathrin-coated vesicles, CCVs) which are destined for fusion with the early endosome. The clathrin lattice serves as a mechanical scaffold but is itself unable to bind directly to membrane components. Clathrin-associated adaptor protein (AP) complexes which can bind directly to both the clathrin lattice and to the lipid and protein components of membranes are considered to be the major clathrin adaptors contributing the CCV formation. AP-2 also serves as a cargo receptor to selectively sort the membrane proteins involved in receptor-mediated endocytosis. AP-2 seems to play a role in the recycling of synaptic vesicle membranes from the presynaptic surface. AP-2 recognizes Y-X-X-[FILMV] (Y-X-X-Phi) and [ED]-X-X-X-L-[LI] endocytosis signal motifs within the cytosolic tails of transmembrane cargo molecules. AP-2 may also play a role in maintaining normal post-endocytic trafficking through the ARF6-regulated, non-clathrin pathway. During long-term potentiation in hippocampal neurons, AP-2 is responsible for the endocytosis of ADAM10. The AP-2 beta subunit acts via its C-terminal appendage domain as a scaffolding platform for endocytic accessory proteins; at least some clathrin-associated sorting proteins (CLASPs) are recognized by their [DE]-X(1,2)-F-X-X-[FL]-X-X-X-R motif. The AP-2 beta subunit binds to clathrin heavy chain, promoting clathrin lattice assembly; clathrin displaces at least some CLASPs from AP2B1 which probably then can be positioned for further coat assembly. The sequence is that of AP-2 complex subunit beta (Ap2b1) from Mus musculus (Mouse).